A 698-amino-acid chain; its full sequence is Elongation factor G (698 aa).

A tr-type G domain is found at 8-290 (ERYRNIGIAA…AVIEFLPAPN (283 aa)). GTP-binding positions include 17 to 24 (AHIDAGKT), 88 to 92 (DTPGH), and 142 to 145 (NKMD).

Belongs to the TRAFAC class translation factor GTPase superfamily. Classic translation factor GTPase family. EF-G/EF-2 subfamily.

The protein localises to the cytoplasm. Catalyzes the GTP-dependent ribosomal translocation step during translation elongation. During this step, the ribosome changes from the pre-translocational (PRE) to the post-translocational (POST) state as the newly formed A-site-bound peptidyl-tRNA and P-site-bound deacylated tRNA move to the P and E sites, respectively. Catalyzes the coordinated movement of the two tRNA molecules, the mRNA and conformational changes in the ribosome. The protein is Elongation factor G of Halorhodospira halophila (strain DSM 244 / SL1) (Ectothiorhodospira halophila (strain DSM 244 / SL1)).